The sequence spans 96 residues: MVAPSELEHSMEKMLLTFHKFAGEKNYMNRDDLQKLLDSEFSEFLKNQNDPMTVDKIMKDLDDCRKGQVNFRSYCSLIAGLLIACNEYYVKHMKKR.

The ancestral calcium site stretch occupies residues 62-73 (DDCRKGQVNFRS).

This sequence belongs to the S-100 family. In terms of assembly, tetramer of 2 light chains (p10) and 2 heavy chains (annexin II).

Its function is as follows. Because p10 induces the dimerization of annexin II (p36), it may function as a regulator of protein phosphorylation in that the p36 monomer is the preferred target (in vitro) of tyrosine-specific kinase. The protein is Protein S100-A10 (s100a10) of Xenopus laevis (African clawed frog).